The primary structure comprises 500 residues: Aspartyl/glutamyl-tRNA(Asn/Gln) amidotransferase subunit B (500 aa).

Belongs to the GatB/GatE family. GatB subfamily. As to quaternary structure, heterotrimer of A, B and C subunits.

The enzyme catalyses L-glutamyl-tRNA(Gln) + L-glutamine + ATP + H2O = L-glutaminyl-tRNA(Gln) + L-glutamate + ADP + phosphate + H(+). It carries out the reaction L-aspartyl-tRNA(Asn) + L-glutamine + ATP + H2O = L-asparaginyl-tRNA(Asn) + L-glutamate + ADP + phosphate + 2 H(+). In terms of biological role, allows the formation of correctly charged Asn-tRNA(Asn) or Gln-tRNA(Gln) through the transamidation of misacylated Asp-tRNA(Asn) or Glu-tRNA(Gln) in organisms which lack either or both of asparaginyl-tRNA or glutaminyl-tRNA synthetases. The reaction takes place in the presence of glutamine and ATP through an activated phospho-Asp-tRNA(Asn) or phospho-Glu-tRNA(Gln). In Allorhizobium ampelinum (strain ATCC BAA-846 / DSM 112012 / S4) (Agrobacterium vitis (strain S4)), this protein is Aspartyl/glutamyl-tRNA(Asn/Gln) amidotransferase subunit B.